The following is a 703-amino-acid chain: Ubiquitin-like modifier-activating enzyme ATG7 (703 aa).

An N-acetylalanine modification is found at Ala-2. The short motif at 15 to 17 is the FAP motif element; that stretch reads FAP. Lys-45 participates in a covalent cross-link: Glycyl lysine isopeptide (Lys-Gly) (interchain with G-Cter in ubiquitin). The Glycyl thioester intermediate role is filled by Cys-572. The residue at position 698 (Ser-698) is a Phosphoserine.

This sequence belongs to the ATG7 family. In terms of assembly, homodimer. Interacts with ATG3; this interaction is essential for the transfer of ATG8-like proteins's thioester from ATG7 to ATG3 and plays a role in the conjugation of ATG12 to ATG5. Interacts with ATG12. Forms intermediate conjugates with GABARAPL1. Forms intermediate conjugates with ATG8-like proteins such as GABARAP, GABARAPL2 or MAP1LC3A. Interacts with EP300 acetyltransferase. Interacts with FOXO1. Post-translationally, acetylated by EP300. In terms of processing, polyubiquitinated on Lys-45 via 'Lys-63'-linked ubiquitin by TRIM32; this modification positiely regulates ATG8 and ATG12 activating enzyme activity leading to initiation of autophagy under metabolic stress. In terms of tissue distribution, widely expressed, especially in kidney, liver, lymph nodes and bone marrow.

It localises to the cytoplasm. The protein localises to the preautophagosomal structure. E1-like activating enzyme involved in the 2 ubiquitin-like systems required for cytoplasm to vacuole transport (Cvt) and autophagy. Activates ATG12 for its conjugation with ATG5 as well as the ATG8 family proteins for their conjugation with phosphatidylethanolamine. Both systems are needed for the ATG8 association to Cvt vesicles and autophagosomes membranes. Required for autophagic death induced by caspase-8 inhibition. Facilitates LC3-I lipidation with phosphatidylethanolamine to form LC3-II which is found on autophagosomal membranes. Required for mitophagy which contributes to regulate mitochondrial quantity and quality by eliminating the mitochondria to a basal level to fulfill cellular energy requirements and preventing excess ROS production. Modulates p53/TP53 activity to regulate cell cycle and survival during metabolic stress. Also plays a key role in the maintenance of axonal homeostasis, the prevention of axonal degeneration, the maintenance of hematopoietic stem cells, the formation of Paneth cell granules, as well as in adipose differentiation. Plays a role in regulating the liver clock and glucose metabolism by mediating the autophagic degradation of CRY1 (clock repressor) in a time-dependent manner. The chain is Ubiquitin-like modifier-activating enzyme ATG7 from Homo sapiens (Human).